Here is a 687-residue protein sequence, read N- to C-terminus: Protein SDA1 homolog (687 aa).

A phosphoserine mark is found at serine 232, serine 234, and serine 236. A coiled-coil region spans residues 254–315 (KKGSKNKKKL…SCKERFEVKM (62 aa)). The disordered stretch occupies residues 484–509 (LEKGENTEDDEDGWESASLSEEEEED). Over residues 490–509 (TEDDEDGWESASLSEEEEED) the composition is skewed to acidic residues. Phosphothreonine is present on threonine 552. 3 positions are modified to phosphoserine: serine 585, serine 589, and serine 595. The disordered stretch occupies residues 604-651 (KKPKSDKETRLATAMAGRTDRKEFVRKKTKINPFSSSTNKEKKKQKNF).

This sequence belongs to the SDA1 family.

The protein localises to the nucleus. It is found in the nucleolus. Required for 60S pre-ribosomal subunits export to the cytoplasm. The polypeptide is Protein SDA1 homolog (Sdad1) (Mus musculus (Mouse)).